Reading from the N-terminus, the 598-residue chain is Arylsulfatase J (598 aa).

The N-terminal stretch at 1–47 (MAPRDSAEPLPPLSPQAWAWSGKFLAMGALAGFSVLSLLTYGYLCWG) is a signal peptide. 3 residues coordinate Ca(2+): Asp82, Asp83, and Cys120. The Nucleophile role is filled by Cys120. At Cys120 the chain carries 3-oxoalanine (Cys). N-linked (GlcNAc...) asparagine glycosylation occurs at Asn155. Lys174 contributes to the substrate binding site. His176 is an active-site residue. Residue His267 participates in substrate binding. Asn304 and Asn316 each carry an N-linked (GlcNAc...) asparagine glycan. Asp325 and Asn326 together coordinate Ca(2+). Lys343 is a substrate binding site. 4 N-linked (GlcNAc...) asparagine glycosylation sites follow: Asn429, Asn495, Asn525, and Asn563. The disordered stretch occupies residues 532–598 (RYPPKDPRSN…IKCHPSVATG (67 aa)). A compositionally biased stretch (basic residues) spans 559-583 (KKKSNKTKAKKMQKKKSKARMRKQL).

This sequence belongs to the sulfatase family. Ca(2+) serves as cofactor. Post-translationally, the conversion to 3-oxoalanine (also known as C-formylglycine, FGly), of a serine or cysteine residue in prokaryotes and of a cysteine residue in eukaryotes, is critical for catalytic activity.

The protein resides in the secreted. This Mus musculus (Mouse) protein is Arylsulfatase J (Arsj).